The primary structure comprises 98 residues: NADH-ubiquinone oxidoreductase chain 4L (98 aa).

3 consecutive transmembrane segments (helical) span residues 1 to 21 (MTPV…GLAF), 29 to 49 (ALLC…LWAL), and 58 to 78 (VAPM…LALL).

This sequence belongs to the complex I subunit 4L family.

It is found in the mitochondrion membrane. It catalyses the reaction a ubiquinone + NADH + 5 H(+)(in) = a ubiquinol + NAD(+) + 4 H(+)(out). Core subunit of the mitochondrial membrane respiratory chain NADH dehydrogenase (Complex I) which catalyzes electron transfer from NADH through the respiratory chain, using ubiquinone as an electron acceptor. Part of the enzyme membrane arm which is embedded in the lipid bilayer and involved in proton translocation. The polypeptide is NADH-ubiquinone oxidoreductase chain 4L (MT-ND4L) (Oncorhynchus clarkii (Cutthroat trout)).